The sequence spans 229 residues: RNA pyrophosphohydrolase (229 aa).

The region spanning 6-149 (GFRPNVGIIL…KRGVYEMALT (144 aa)) is the Nudix hydrolase domain. Positions 38-59 (GGIDRGETPEQAMFRELHEEVG) match the Nudix box motif. Residues 191–229 (KPGMELPPGASFDPDPQNSVPAPLEALPTLPVPKKPLDA) form a disordered region. A compositionally biased stretch (pro residues) spans 220–229 (LPVPKKPLDA).

The protein belongs to the Nudix hydrolase family. RppH subfamily. It depends on a divalent metal cation as a cofactor.

In terms of biological role, accelerates the degradation of transcripts by removing pyrophosphate from the 5'-end of triphosphorylated RNA, leading to a more labile monophosphorylated state that can stimulate subsequent ribonuclease cleavage. This Acidovorax ebreus (strain TPSY) (Diaphorobacter sp. (strain TPSY)) protein is RNA pyrophosphohydrolase.